A 372-amino-acid polypeptide reads, in one-letter code: MKTVVVSGASVAGTAAAYWLGRHGYSVTMVERHPGLRPGGQAIDVRGPALDVLERMGLLAAAQEHKTRIRGASFVDRDGNELFRDTESTPTGGPVNSPDIELLRDDLVELLYGATQPSVEYLFDDSISTLQDDGDSVRVTFERAAAREFDLVIGADGLHSNVRRLVFGPEEQFVKRLGTHAAIFTVPNFLELDYWQTWHYGDSTMAGVYSARNNTEARAALAFMDTELRIDYRDTEAQFAELQRRMAEDGWVRAQLLHYMRSAPDFYFDEMSQILMDRWSRGRVALVGDAGYCCSPLSGQGTSVALLGAYILAGELKAAGDDYQLGFANYHAEFHGFVERNQWLVSDNIPGGAPIPQEEFERIVHSITIKDY.

This is an uncharacterized protein from Mycobacterium tuberculosis (strain CDC 1551 / Oshkosh).